The sequence spans 112 residues: uncharacterized protein (112 aa).

An N-terminal signal peptide occupies residues 1–29; it reads MINLHRLCIIHVVATLLSTLLSLISVAIS. Residue Asn84 is glycosylated (N-linked (GlcNAc...) asparagine). Residues 84-112 form a disordered region; it reads NLSKGYNQRPEGSKEESHMVVKEKRKGDH. The span at 94-112 shows a compositional bias: basic and acidic residues; that stretch reads EGSKEESHMVVKEKRKGDH.

It localises to the secreted. This is an uncharacterized protein from Homo sapiens (Human).